The sequence spans 945 residues: Microtubule cross-linking factor 3 (945 aa).

Low complexity-rich tracts occupy residues 1–23, 72–93, and 110–126; these read MSQPPSGGAAPAATSASAAAAAT, QQQLQQQQQQGNKITGRSTSGT, and PKGAVPGAVQPAPGAEG. The N-terminal stretch at 1 to 25 is a signal peptide; that stretch reads MSQPPSGGAAPAATSASAAAAATEA. Disordered regions lie at residues 1-250, 265-293, 307-366, and 494-522; these read MSQP…SYWK, KERAAAAAAAAQMHTKNGGGGSRSSPVAG, SPMA…TLKN, and LSLKRRGSKDLPKSEKKAQQTPTEDDNED. Residues 141 to 151 show a composition bias toward basic and acidic residues; it reads GQPEEAPREIE. A compositionally biased stretch (gly residues) spans 164-179; the sequence is GGVGGGGEGGGAGGGP. The segment covering 219 to 235 has biased composition (low complexity); the sequence is TAATSKTPGPGSRNSGS. A compositionally biased stretch (gly residues) spans 236-247; it reads GSTGSGSGGGGS. Low complexity predominate over residues 328–345; it reads AMQAAAPPSSQPHSQQLQ. Residues 340-724 adopt a coiled-coil conformation; it reads HSQQLQEQED…GKVMQLQYEN (385 aa). Composition is skewed to basic and acidic residues over residues 353-366 and 494-511; these read EMEKLREENETLKN and LSLKRRGSKDLPKSEKKA. Ser-567 carries the phosphoserine modification. The segment at 741–811 is disordered; sequence GIRGSPRDSD…PWPKSFSDRQ (71 aa). A compositionally biased stretch (basic and acidic residues) spans 745–766; it reads SPRDSDAESDAGKKESDDDSRP. A Phosphoserine modification is found at Ser-779. Residues 809 to 833 are a coiled coil; the sequence is DRQQMKDIRSEAERLGKTIDRLIAD. Residues 913–933 form a helical membrane-spanning segment; sequence PIILLILILVLFSSLSYTTIF.

The protein belongs to the MTCL family.

It localises to the membrane. The protein is Microtubule cross-linking factor 3 (Mtcl3) of Mus musculus (Mouse).